Reading from the N-terminus, the 478-residue chain is MNRDSFYPAIACFPLLLMLAGCAPMHETRQALSQQTPAAQVDTALPTALKMVGQTXQWWLEYHDNQLTSLINNALQNAPDMQVAEQRIQLAEAQAKAVATQDGPQIDFSADMERQKMSAEGLMGPFALNDPAAGTTGPWYTNGTFGLTAGWHLDIWGKNRAEVTARLGTVKARAAEREQTRQLLAGSVARLYWEWQTQAALNTVLQQIEKEQNTIIATDRQLYQNGITSSVEGVETDINASKTRQQLNDVAGKMKIIEARLSALTNNQTKSLKLKPVALPKVASQLPDELGYSLLARRADLQAAHWYVESSLSTIDAAKAAFYPDINLMAFLQQDALHLSDLFRHSAQQMGVTAGLTLPIFDSGRLNANLDIAKAESNLSIASYNKAVVEAVNDVARAASQVQTLAEKNQHQAQIERDALRVVGLAQARFNAGIIAGSRVSEARIPALRERANGLLLQGQWLDASIQLTGALGGGYKR.

The N-terminal stretch at 1–21 (MNRDSFYPAIACFPLLLMLAG) is a signal peptide. A lipid anchor (N-palmitoyl cysteine) is attached at Cys-22. Cys-22 is lipidated: S-diacylglycerol cysteine.

It belongs to the outer membrane factor (OMF) (TC 1.B.17) family.

It is found in the cell outer membrane. In terms of biological role, could be involved in resistance to puromycin, acriflavine and tetraphenylarsonium chloride. In Escherichia coli (strain K12), this protein is Putative multidrug resistance outer membrane protein MdtQ (mdtQ).